We begin with the raw amino-acid sequence, 151 residues long: Transcriptional repressor NrdR (151 aa).

A zinc finger lies at 3-34 (CPYCAYGESKVVDSRSTEDGSSIRRRRECLKC). Residues 49–139 (ILVIKKNMSR…VYRQFKDINT (91 aa)) form the ATP-cone domain.

This sequence belongs to the NrdR family. Zn(2+) is required as a cofactor.

In terms of biological role, negatively regulates transcription of bacterial ribonucleotide reductase nrd genes and operons by binding to NrdR-boxes. In Clostridium botulinum (strain 657 / Type Ba4), this protein is Transcriptional repressor NrdR.